A 440-amino-acid chain; its full sequence is Deoxyguanosinetriphosphate triphosphohydrolase-like protein (440 aa).

The 196-residue stretch at 61–256 (RLIHSLEVSC…MEAADDLCYS (196 aa)) folds into the HD domain.

Belongs to the dGTPase family. Type 3 subfamily.

The chain is Deoxyguanosinetriphosphate triphosphohydrolase-like protein from Synechocystis sp. (strain ATCC 27184 / PCC 6803 / Kazusa).